A 309-amino-acid polypeptide reads, in one-letter code: Calponin-2 (309 aa).

N-acetylserine is present on Ser2. Residues Lys8 and Lys25 each carry the N6-acetyllysine modification. In terms of domain architecture, Calponin-homology (CH) spans 28 to 132; it reads PQKEAELRTW…SLLALAGKAK (105 aa). Phosphoserine is present on Ser138. Calponin-like repeat units lie at residues 166 to 191, 206 to 231, and 245 to 269; these read IGLQ…RHLY, ISLQ…RHIY, and MSLQ…RQIY. The tract at residues 283 to 309 is disordered; the sequence is APSGTGDCPDPGEVPEYPPYYQEEAGY.

The protein belongs to the calponin family. As to expression, heart and smooth muscle.

Functionally, thin filament-associated protein that is implicated in the regulation and modulation of smooth muscle contraction. It is capable of binding to actin, calmodulin and tropomyosin. The interaction of calponin with actin inhibits the actomyosin Mg-ATPase activity. The protein is Calponin-2 (CNN2) of Homo sapiens (Human).